A 265-amino-acid chain; its full sequence is Tryptophan 2,3-dioxygenase (265 aa).

Residues 38-42 and Arg-104 contribute to the substrate site; that span reads FIVVH. His-223 serves as a coordination point for heme. Thr-237 serves as a coordination point for substrate.

The protein belongs to the tryptophan 2,3-dioxygenase family. As to quaternary structure, homotetramer. Heme serves as cofactor.

It carries out the reaction L-tryptophan + O2 = N-formyl-L-kynurenine. It functions in the pathway amino-acid degradation; L-tryptophan degradation via kynurenine pathway; L-kynurenine from L-tryptophan: step 1/2. In terms of biological role, heme-dependent dioxygenase that catalyzes the oxidative cleavage of the L-tryptophan (L-Trp) pyrrole ring and converts L-tryptophan to N-formyl-L-kynurenine. Catalyzes the oxidative cleavage of the indole moiety. The sequence is that of Tryptophan 2,3-dioxygenase from Anaeromyxobacter dehalogenans (strain 2CP-C).